Consider the following 188-residue polypeptide: Hypoxanthine/guanine phosphoribosyltransferase (188 aa).

Belongs to the purine/pyrimidine phosphoribosyltransferase family. Archaeal HPRT subfamily. In terms of assembly, homodimer.

The protein resides in the cytoplasm. It catalyses the reaction IMP + diphosphate = hypoxanthine + 5-phospho-alpha-D-ribose 1-diphosphate. The enzyme catalyses GMP + diphosphate = guanine + 5-phospho-alpha-D-ribose 1-diphosphate. It participates in purine metabolism; IMP biosynthesis via salvage pathway; IMP from hypoxanthine: step 1/1. In terms of biological role, catalyzes a salvage reaction resulting in the formation of IMP that is energically less costly than de novo synthesis. This is Hypoxanthine/guanine phosphoribosyltransferase from Methanobrevibacter ruminantium (strain ATCC 35063 / DSM 1093 / JCM 13430 / OCM 146 / M1) (Methanobacterium ruminantium).